A 431-amino-acid polypeptide reads, in one-letter code: Protein CLT2, chloroplastic (431 aa).

The transit peptide at 1 to 79 (MDTVLMATTP…PMRRPRFSVG (79 aa)) directs the protein to the chloroplast. The next 10 helical transmembrane spans lie at 99-119 (VVIV…LVPM), 122-142 (YPFF…FTIL), 163-183 (FAII…AAAM), 188-208 (VIPI…LLIL), 212-232 (FLLN…VAVS), 244-264 (IGFL…GASI), 284-304 (IFVV…LLLP), 343-363 (ILPL…LHLV), 365-385 (ISSA…AVYI), and 403-423 (FTMG…PTTP).

It belongs to the CRT-like transporter family.

Its subcellular location is the plastid. The protein localises to the chloroplast membrane. In terms of biological role, involved in thiol transport from the plastid to the cytosol. Transports probably both glutathione (GSH) and its precursor, gamma-glutamylcysteine (gamma-EC). This chain is Protein CLT2, chloroplastic, found in Arabidopsis thaliana (Mouse-ear cress).